Consider the following 68-residue polypeptide: Large ribosomal subunit protein uL30 (68 aa).

Belongs to the universal ribosomal protein uL30 family. In terms of assembly, part of the 50S ribosomal subunit.

In Bartonella tribocorum (strain CIP 105476 / IBS 506), this protein is Large ribosomal subunit protein uL30.